The primary structure comprises 90 residues: Protein LIM3 (90 aa).

Positions 1–26 (MAAVKFLVCSVLLVVLATQSEIGLAQ) are cleaved as a signal peptide. 4 disulfides stabilise this stretch: Cys28-Cys65, Cys38-Cys54, Cys55-Cys80, and Cys67-Cys87.

This sequence belongs to the A9/FIL1 family.

It localises to the secreted. The sequence is that of Protein LIM3 (LIM3) from Lilium longiflorum (Trumpet lily).